The chain runs to 1010 residues: Retinoblastoma-related protein 3 (1010 aa).

The tract at residues 416–616 (TPVSTAMTTA…EKGSSMYNSL (201 aa)) is domain A. Positions 416 to 858 (TPVSTAMTTA…NEVFIPAVKS (443 aa)) are pocket. Residues 617 to 727 (IVARPALSVE…PAAGGETCAE (111 aa)) are spacer. The segment at 728–858 (TGIGVFFSKI…NEVFIPAVKS (131 aa)) is domain B. 2 disordered regions span residues 867–889 (ASAS…FPES) and 986–1010 (GSDR…PSDS).

Belongs to the retinoblastoma protein (RB) family.

Its subcellular location is the nucleus. Regulator of biological processes that recruits a histone deacetylase to control gene transcription. May play a role in the entry into mitosis, negatively regulating the cell proliferation. Formation of stable complexes with geminiviridae replication-associated proteins may create a cellular environment which favors viral DNA replication. This is Retinoblastoma-related protein 3 (RBR3) from Zea mays (Maize).